The chain runs to 67 residues: Andropin (67 aa).

Residues 1-19 (MKYFLVLVVLTLILAISVG) form the signal peptide.

Belongs to the andropin family. As to expression, ejaculatory duct of adult males.

It localises to the secreted. Its function is as follows. Male-specific peptide with moderate activity against Gram-positive bacteria. The sequence is that of Andropin (Anp) from Drosophila orena (Fruit fly).